Here is a 454-residue protein sequence, read N- to C-terminus: Zinc finger CCCH domain-containing protein 66 (454 aa).

The span at 1–23 shows a compositional bias: gly residues; it reads MAAGAGAGGGGGEGDSNGGGTSP. Residues 1-30 are disordered; that stretch reads MAAGAGAGGGGGEGDSNGGGTSPGGVSAAA. 5 consecutive C3H1-type zinc fingers follow at residues 66–94, 111–139, 157–185, 318–346, and 364–392; these read RIGE…HPPN, RVGQ…HPRE, RPNE…HPQP, RPDQ…HPKE, and RPGE…HPMG. The disordered stretch occupies residues 405–454; that stretch reads DVSSMHYQLSPSPGHPGILLDGGSGRSHRVPQSDSQQIPSGDGNAEREAS. Positions 434–443 are enriched in polar residues; the sequence is VPQSDSQQIP.

The protein is Zinc finger CCCH domain-containing protein 66 of Oryza sativa subsp. japonica (Rice).